Here is a 519-residue protein sequence, read N- to C-terminus: uncharacterized protein (519 aa).

The protein belongs to the glycogen phosphorylase family.

This is an uncharacterized protein from Methanocaldococcus jannaschii (strain ATCC 43067 / DSM 2661 / JAL-1 / JCM 10045 / NBRC 100440) (Methanococcus jannaschii).